A 264-amino-acid chain; its full sequence is Thymidylate synthase (264 aa).

Arg21 lines the dUMP pocket. His51 serves as a coordination point for (6R)-5,10-methylene-5,6,7,8-tetrahydrofolate. 126-127 (RR) is a binding site for dUMP. The active-site Nucleophile is the Cys146. DUMP-binding positions include 166–169 (RSAD), Asn177, and 207–209 (HLY). Asp169 lines the (6R)-5,10-methylene-5,6,7,8-tetrahydrofolate pocket. Ala263 is a (6R)-5,10-methylene-5,6,7,8-tetrahydrofolate binding site.

Belongs to the thymidylate synthase family. Bacterial-type ThyA subfamily. In terms of assembly, homodimer.

The protein resides in the cytoplasm. It carries out the reaction dUMP + (6R)-5,10-methylene-5,6,7,8-tetrahydrofolate = 7,8-dihydrofolate + dTMP. Its pathway is pyrimidine metabolism; dTTP biosynthesis. Catalyzes the reductive methylation of 2'-deoxyuridine-5'-monophosphate (dUMP) to 2'-deoxythymidine-5'-monophosphate (dTMP) while utilizing 5,10-methylenetetrahydrofolate (mTHF) as the methyl donor and reductant in the reaction, yielding dihydrofolate (DHF) as a by-product. This enzymatic reaction provides an intracellular de novo source of dTMP, an essential precursor for DNA biosynthesis. In Nitrosomonas eutropha (strain DSM 101675 / C91 / Nm57), this protein is Thymidylate synthase.